The sequence spans 61 residues: MAKDIITGRKTVFGNKRSKALNSVRRSWKPNLQKVRILVDGKPKRVWVSARALKSGKVKRA.

Belongs to the bacterial ribosomal protein bL28 family.

In Lactobacillus gasseri (strain ATCC 33323 / DSM 20243 / BCRC 14619 / CIP 102991 / JCM 1131 / KCTC 3163 / NCIMB 11718 / NCTC 13722 / AM63), this protein is Large ribosomal subunit protein bL28.